We begin with the raw amino-acid sequence, 236 residues long: Small ribosomal subunit protein uS3 (236 aa).

Residues 39-107 (IRSYVLEELR…ETSLNIVEIR (69 aa)) enclose the KH type-2 domain. Residues 214–236 (ASERRATEADQSGSSSNRRRENA) form a disordered region.

The protein belongs to the universal ribosomal protein uS3 family. Part of the 30S ribosomal subunit. Forms a tight complex with proteins S10 and S14.

In terms of biological role, binds the lower part of the 30S subunit head. Binds mRNA in the 70S ribosome, positioning it for translation. The chain is Small ribosomal subunit protein uS3 from Bartonella tribocorum (strain CIP 105476 / IBS 506).